The chain runs to 212 residues: Ribonuclease HII (212 aa).

In terms of domain architecture, RNase H type-2 spans 1–205 (MTICGVDEAG…VQDILDRASQ (205 aa)). Residues Asp-7, Glu-8, and Asp-100 each contribute to the a divalent metal cation site.

It belongs to the RNase HII family. Mn(2+) is required as a cofactor. Mg(2+) serves as cofactor.

It localises to the cytoplasm. The enzyme catalyses Endonucleolytic cleavage to 5'-phosphomonoester.. Endonuclease that specifically degrades the RNA of RNA-DNA hybrids. This Methanocorpusculum labreanum (strain ATCC 43576 / DSM 4855 / Z) protein is Ribonuclease HII.